The primary structure comprises 178 residues: Cyclin-dependent kinase inhibitor 1B (178 aa).

Polar residues predominate over residues 1–11 (MSNVRVSNGSP). Positions 1–31 (MSNVRVSNGSPSLERMDARQAEYPKPSACRN) are disordered. Serine 10 is subject to Phosphoserine; by UHMK1. The segment at 51–91 (DMEEASQRKWNFDFQNHKPLEGKYEWQEVEKGSLPEFYYRP) is interaction with CDK2. Tyrosine 74 carries the post-translational modification Phosphotyrosine; by SRC. A disordered region spans residues 87-178 (FYYRPPRPPK…RTEENVSDGS (92 aa)). Tyrosine 88 bears the Phosphotyrosine; by ABL, LYN, SRC and JAK2 mark. Position 89 is a phosphotyrosine (tyrosine 89). Residues 104–113 (QESQDVSGTR) show a composition bias toward polar residues. Residues 126-137 (EDTHLVDQKTDT) show a composition bias toward basic and acidic residues. The short motif at 153–169 (KRPATDDSSPQNKRANR) is the Nuclear localization signal element. Threonine 157 carries the phosphothreonine; by CaMK1, PKB/AKT1, RPS6KA1, RPS6KA3 and PIM1 modification. The residue at position 170 (threonine 170) is a Phosphothreonine.

This sequence belongs to the CDI family. In terms of assembly, forms a ternary complex composed of CCNE1, CDK2 and CDKN1B. Interacts directly with CCNE1; the interaction is inhibited by CDK2-dependent phosphorylation. Interacts with COPS5, subunit of the COP9 signalosome complex; the interaction leads to CDKN1B degradation. Interacts with NUP50; the interaction leads to nuclear import and degradation of phosphorylated CDKN1B. Interacts with CCND1 and SNX6. Interacts (Thr-198-phosphorylated form) with 14-3-3 proteins, binds strongly YWHAQ, weakly YWHAE and YWHAH, but not YWHAB nor YWHAZ; the interaction with YWHAQ results in translocation to the cytoplasm. Interacts with AKT1 and LYN; the interactions lead to cytoplasmic mislocation, phosphorylation of CDKN1B and inhibition of cell cycle arrest. Forms a ternary complex with CCNA2 and CDK2; CDKN1B inhibits the kinase activity of CDK2 through conformational rearrangements. Interacts (unphosphorylated form) with CDK2. Forms a complex with CDK2 and SPDYA, but does not directly interact with SPDYA. Forms a ternary complex composed of cyclin D, CDK4 and CDKN1B. Interacts (phosphorylated on Tyr-88 and Tyr-89) with CDK4; the interaction is required for cyclin D and CDK4 complex assembly, induces nuclear translocation and activates the CDK4 kinase activity. Interacts with GRB2. Interacts with PIM1. Identified in a complex with SKP1, SKP2 and CKS1B. Interacts with UHMK1; the interaction leads to cytoplasmic mislocation, phosphorylation of CDKN1B and inhibition of cell cycle arrest. Also interacts with CDK1. Dephosphorylated by PPM1H, leading to CDKN1B stability. Phosphorylated; phosphorylation occurs on serine, threonine and tyrosine residues. Phosphorylation on Ser-10 is the major site of phosphorylation in resting cells, takes place at the G(0)-G(1) phase and leads to protein stability. Phosphorylation on other sites is greatly enhanced by mitogens, growth factors, MYC and in certain cancer cell lines. The phosphorylated form found in the cytoplasm is inactivate. Phosphorylation on Tyr-88 has no effect on binding CDK complexes. Post-translationally, ubiquitinated; in the cytoplasm by the KPC complex (composed of RNF123/KPC1 and UBAC1/KPC2) and, in the nucleus, by SCF(SKP2). The latter requires prior phosphorylation on Thr-187. Ubiquitinated; by a TRIM21-containing SCF(SKP2)-like complex; leads to its degradation. In terms of processing, subject to degradation in the lysosome. Interaction with SNX6 promotes lysosomal degradation.

It is found in the nucleus. It localises to the cytoplasm. Its subcellular location is the endosome. Important regulator of cell cycle progression. Inhibits the kinase activity of CDK2 bound to cyclin A, but has little inhibitory activity on CDK2 bound to SPDYA. Involved in G1 arrest. Potent inhibitor of cyclin E- and cyclin A-CDK2 complexes. Forms a complex with cyclin type D-CDK4 complexes and is involved in the assembly, stability, and modulation of CCND1-CDK4 complex activation. Acts either as an inhibitor or an activator of cyclin type D-CDK4 complexes depending on its phosphorylation state and/or stoichometry. This chain is Cyclin-dependent kinase inhibitor 1B (CDKN1B), found in Neovison vison (American mink).